We begin with the raw amino-acid sequence, 204 residues long: Probable chorismate pyruvate-lyase (204 aa).

Residues arginine 75, leucine 113, and glutamate 160 each coordinate substrate.

Belongs to the UbiC family.

It localises to the cytoplasm. It carries out the reaction chorismate = 4-hydroxybenzoate + pyruvate. The protein operates within cofactor biosynthesis; ubiquinone biosynthesis. Its function is as follows. Removes the pyruvyl group from chorismate, with concomitant aromatization of the ring, to provide 4-hydroxybenzoate (4HB) for the ubiquinone pathway. The polypeptide is Probable chorismate pyruvate-lyase (Alcanivorax borkumensis (strain ATCC 700651 / DSM 11573 / NCIMB 13689 / SK2)).